Reading from the N-terminus, the 146-residue chain is MIREAQRSELPAILELWLESTTWGHPFIKANYWRDCIPLVRDAYLANAQNWVWEEDGKLLGFVSIMEGRFLAAMFVAPKAVRRGIGKALMQYVQQRHPHLMLEVYQKNQPAINFYQAQGFHIVDCAWQDETQLPTWIMSWPVVQTL.

The N-acetyltransferase domain maps to 1–143 (MIREAQRSEL…PTWIMSWPVV (143 aa)).

The protein belongs to the acetyltransferase family.

The enzyme catalyses L-lysyl-[protein] + acetyl-CoA = N(6)-acetyl-L-lysyl-[protein] + CoA + H(+). N-epsilon-lysine acetyltransferase that catalyzes acetylation of a large number of proteins. Overexpression inhibits motility. This is Peptidyl-lysine N-acetyltransferase YiaC (yiaC) from Escherichia coli (strain K12).